Reading from the N-terminus, the 277-residue chain is Phosphatidylglycerol--prolipoprotein diacylglyceryl transferase (277 aa).

The next 7 membrane-spanning stretches (helical) occupy residues 21-41 (LAVR…LWLA), 60-80 (LLFA…VLFY), 95-115 (VWTG…AMLW), 124-144 (FFTI…AGRL), 176-196 (SQLY…NWFI), 203-223 (GTVS…VEYV), and 239-259 (MGQI…LWAF). R143 contributes to the a 1,2-diacyl-sn-glycero-3-phospho-(1'-sn-glycerol) binding site.

Belongs to the Lgt family.

The protein localises to the cell inner membrane. The catalysed reaction is L-cysteinyl-[prolipoprotein] + a 1,2-diacyl-sn-glycero-3-phospho-(1'-sn-glycerol) = an S-1,2-diacyl-sn-glyceryl-L-cysteinyl-[prolipoprotein] + sn-glycerol 1-phosphate + H(+). It functions in the pathway protein modification; lipoprotein biosynthesis (diacylglyceryl transfer). In terms of biological role, catalyzes the transfer of the diacylglyceryl group from phosphatidylglycerol to the sulfhydryl group of the N-terminal cysteine of a prolipoprotein, the first step in the formation of mature lipoproteins. The polypeptide is Phosphatidylglycerol--prolipoprotein diacylglyceryl transferase (Aliivibrio fischeri (strain ATCC 700601 / ES114) (Vibrio fischeri)).